The following is a 945-amino-acid chain: Isoleucine--tRNA ligase 1 (945 aa).

Residues 66–76 (PYANGDIHLGH) carry the 'HIGH' region motif. E581 serves as a coordination point for L-isoleucyl-5'-AMP. Positions 622–626 (KMSKS) match the 'KMSKS' region motif. Residue K625 coordinates ATP. The Zn(2+) site is built by C908, C911, C928, and C931.

This sequence belongs to the class-I aminoacyl-tRNA synthetase family. IleS type 1 subfamily. In terms of assembly, monomer. Zn(2+) is required as a cofactor.

Its subcellular location is the cytoplasm. The enzyme catalyses tRNA(Ile) + L-isoleucine + ATP = L-isoleucyl-tRNA(Ile) + AMP + diphosphate. In terms of biological role, catalyzes the attachment of isoleucine to tRNA(Ile). As IleRS can inadvertently accommodate and process structurally similar amino acids such as valine, to avoid such errors it has two additional distinct tRNA(Ile)-dependent editing activities. One activity is designated as 'pretransfer' editing and involves the hydrolysis of activated Val-AMP. The other activity is designated 'posttransfer' editing and involves deacylation of mischarged Val-tRNA(Ile). This Burkholderia mallei (strain ATCC 23344) protein is Isoleucine--tRNA ligase 1.